We begin with the raw amino-acid sequence, 663 residues long: DNA ligase (663 aa).

NAD(+)-binding positions include 34 to 38, 83 to 84, and Glu-114; these read DYEYD and SL. Lys-116 acts as the N6-AMP-lysine intermediate in catalysis. Arg-137, Glu-171, Lys-286, and Lys-310 together coordinate NAD(+). The Zn(2+) site is built by Cys-404, Cys-407, Cys-422, and Cys-427. Residues 585–663 form the BRCT domain; sequence TVESPLTGKN…ADEFIKLANG (79 aa).

It belongs to the NAD-dependent DNA ligase family. LigA subfamily. Mg(2+) serves as cofactor. The cofactor is Mn(2+).

The enzyme catalyses NAD(+) + (deoxyribonucleotide)n-3'-hydroxyl + 5'-phospho-(deoxyribonucleotide)m = (deoxyribonucleotide)n+m + AMP + beta-nicotinamide D-nucleotide.. DNA ligase that catalyzes the formation of phosphodiester linkages between 5'-phosphoryl and 3'-hydroxyl groups in double-stranded DNA using NAD as a coenzyme and as the energy source for the reaction. It is essential for DNA replication and repair of damaged DNA. This chain is DNA ligase, found in Brachyspira hyodysenteriae (strain ATCC 49526 / WA1).